Here is a 204-residue protein sequence, read N- to C-terminus: Threonylcarbamoyl-AMP synthase (204 aa).

The region spanning 10 to 204 is the YrdC-like domain; the sequence is ADELDLVANY…KDLLAGHILR (195 aa).

This sequence belongs to the SUA5 family. TsaC subfamily.

Its subcellular location is the cytoplasm. It catalyses the reaction L-threonine + hydrogencarbonate + ATP = L-threonylcarbamoyladenylate + diphosphate + H2O. Its function is as follows. Required for the formation of a threonylcarbamoyl group on adenosine at position 37 (t(6)A37) in tRNAs that read codons beginning with adenine. Catalyzes the conversion of L-threonine, HCO(3)(-)/CO(2) and ATP to give threonylcarbamoyl-AMP (TC-AMP) as the acyladenylate intermediate, with the release of diphosphate. This is Threonylcarbamoyl-AMP synthase from Moraxella catarrhalis (strain BBH18).